A 313-amino-acid chain; its full sequence is Protein FixB (313 aa).

255-283 (LYLAVGISGQIQHMVGANASQTIFAINKD) is a binding site for FAD.

The protein belongs to the ETF alpha-subunit/FixB family. Heterodimer of FixA and FixB.

It participates in amine and polyamine metabolism; carnitine metabolism. Functionally, required for anaerobic carnitine reduction. May bring reductant to CaiA. The sequence is that of Protein FixB from Escherichia coli O7:K1 (strain IAI39 / ExPEC).